The following is a 143-amino-acid chain: General odorant-binding protein 28a (143 aa).

The signal sequence occupies residues 1 to 21 (MQSTPIILVAIVLLGAALVRA). Disulfide bonds link Cys38–Cys69, Cys65–Cys123, and Cys113–Cys132.

As to expression, expressed in antenna, mostly on the medial and posterior surface of the third antennal segment.

The protein localises to the secreted. The polypeptide is General odorant-binding protein 28a (Obp28a) (Drosophila melanogaster (Fruit fly)).